A 125-amino-acid polypeptide reads, in one-letter code: Large ribosomal subunit protein bL12 (125 aa).

This sequence belongs to the bacterial ribosomal protein bL12 family. As to quaternary structure, homodimer. Part of the ribosomal stalk of the 50S ribosomal subunit. Forms a multimeric L10(L12)X complex, where L10 forms an elongated spine to which 2 to 4 L12 dimers bind in a sequential fashion. Binds GTP-bound translation factors.

Forms part of the ribosomal stalk which helps the ribosome interact with GTP-bound translation factors. Is thus essential for accurate translation. The chain is Large ribosomal subunit protein bL12 from Rickettsia prowazekii (strain Madrid E).